Consider the following 224-residue polypeptide: Small ribosomal subunit protein uS3 (224 aa).

Residues isoleucine 38–lysine 106 enclose the KH type-2 domain.

It belongs to the universal ribosomal protein uS3 family. As to quaternary structure, part of the 30S ribosomal subunit. Forms a tight complex with proteins S10 and S14.

In terms of biological role, binds the lower part of the 30S subunit head. Binds mRNA in the 70S ribosome, positioning it for translation. The protein is Small ribosomal subunit protein uS3 of Lactobacillus helveticus (strain DPC 4571).